Consider the following 68-residue polypeptide: Conotoxin Ar5.3 (68 aa).

The first 19 residues, 1 to 19 (MLCLPVFIILLLLASPAAS), serve as a signal peptide directing secretion. Positions 20–53 (NPLEKRIQNDLIRAALEDADMENDPRSIIDSVKT) are excised as a propeptide.

Belongs to the conotoxin T superfamily. In terms of processing, contains 2 disulfide bonds that can be either 'C1-C3, C2-C4' or 'C1-C4, C2-C3', since these disulfide connectivities have been observed for conotoxins with cysteine framework V (for examples, see AC P0DQQ7 and AC P81755). Expressed by the venom duct.

It is found in the secreted. The chain is Conotoxin Ar5.3 from Conus arenatus (Sand-dusted cone).